Here is a 334-residue protein sequence, read N- to C-terminus: Ephrin-B1 (334 aa).

The first 25 residues, 1-25, serve as a signal peptide directing secretion; that stretch reads MARPRGGRWLLGVLLALCRLAAPLA. The Ephrin RBD domain occupies 26-160; the sequence is KSLEPVSWSA…TRSMKIVMKV (135 aa). The Extracellular segment spans residues 26–231; the sequence is KSLEPVSWSA…FLSSKVAVFA (206 aa). Cystine bridges form between cysteine 60-cysteine 97 and cysteine 85-cysteine 149. The N-linked (GlcNAc...) asparagine glycan is linked to asparagine 135. A disordered region spans residues 175–218; it reads SRPSKEADNTVKIVTQSPRHKVPTVEEPGKPGSVNQNGQETQGP. Polar residues predominate over residues 207–218; it reads SVNQNGQETQGP. The chain crosses the membrane as a helical span at residues 232 to 252; sequence AIGAGCVIFILIIIFLVVLLI. Over 253-334 the chain is Cytoplasmic; sequence KIRKRHRKHT…QSPANIYYKV (82 aa). The PDZ-binding motif lies at 332–334; the sequence is YKV.

Belongs to the ephrin family. Binds to the receptor tyrosine kinase EPHB2. Interacts with GRIP1 and GRIP2. Post-translationally, inducible phosphorylation of tyrosine residues in the cytoplasmic domain.

It localises to the membrane. Cell surface transmembrane ligand for Eph receptors, a family of receptor tyrosine kinases which are crucial for migration, repulsion and adhesion during neuronal, vascular and epithelial development. Binds promiscuously Eph receptors residing on adjacent cells, leading to contact-dependent bidirectional signaling into neighboring cells. The signaling pathway downstream of the receptor is referred to as forward signaling while the signaling pathway downstream of the ephrin ligand is referred to as reverse signaling. The chain is Ephrin-B1 (EFNB1) from Gallus gallus (Chicken).